We begin with the raw amino-acid sequence, 159 residues long: Transcriptional repressor NrdR (159 aa).

A zinc finger lies at 3 to 34 (CPFCRHEDTQVVDSRVSEDGAAIRRRRRCSAC). The ATP-cone domain maps to 49–139 (PAVVKKDGSR…VYRRFEDVSE (91 aa)).

This sequence belongs to the NrdR family. The cofactor is Zn(2+).

Functionally, negatively regulates transcription of bacterial ribonucleotide reductase nrd genes and operons by binding to NrdR-boxes. The sequence is that of Transcriptional repressor NrdR from Burkholderia multivorans (strain ATCC 17616 / 249).